The sequence spans 205 residues: Transcriptional regulator GfcR (205 aa).

This sequence belongs to the purine/pyrimidine phosphoribosyltransferase family. GfcR subfamily.

The sequence is that of Transcriptional regulator GfcR from Methanococcus maripaludis (strain DSM 14266 / JCM 13030 / NBRC 101832 / S2 / LL).